Here is a 376-residue protein sequence, read N- to C-terminus: c-di-GMP synthase (376 aa).

This sequence belongs to the CD-NTase family. G05 subfamily.

The catalysed reaction is 2 GTP = 3',3'-c-di-GMP + 2 diphosphate. Its function is as follows. Cyclic nucleotide synthase (second messenger synthase) of a CBASS antivirus system. CBASS (cyclic oligonucleotide-based antiphage signaling system) provides immunity against bacteriophage. The CD-NTase protein synthesizes cyclic nucleotides in response to infection; these serve as specific second messenger signals. The signals activate a diverse range of effectors, leading to bacterial cell death and thus abortive phage infection. A type I-D CBASS(GG) system. Functionally, cyclic dinucleotide synthase that catalyzes the synthesis of c-di-GMP, has no activity with other NTP substrates. This chain is c-di-GMP synthase, found in Roseivirga ehrenbergii (strain DSM 102268 / JCM 13514 / KCTC 12282 / NCIMB 14502 / KMM 6017).